Here is an 81-residue protein sequence, read N- to C-terminus: U17-lycotoxin-Ls1a (81 aa).

The N-terminal stretch at 1–22 (MSSKVQAVLLLVGVITFLAVHA) is a signal peptide. Positions 23 to 34 (QEELSENTESER) are excised as a propeptide. Intrachain disulfides connect cysteine 36/cysteine 51, cysteine 50/cysteine 67, and cysteine 58/cysteine 65.

Belongs to the neurotoxin 02 (plectoxin) family. In terms of tissue distribution, expressed by the venom gland.

The protein localises to the secreted. The polypeptide is U17-lycotoxin-Ls1a (Lycosa singoriensis (Wolf spider)).